The sequence spans 317 residues: Transaldolase (317 aa).

Catalysis depends on K132, which acts as the Schiff-base intermediate with substrate.

Belongs to the transaldolase family. Type 1 subfamily. As to quaternary structure, homodimer.

It localises to the cytoplasm. It carries out the reaction D-sedoheptulose 7-phosphate + D-glyceraldehyde 3-phosphate = D-erythrose 4-phosphate + beta-D-fructose 6-phosphate. It participates in carbohydrate degradation; pentose phosphate pathway; D-glyceraldehyde 3-phosphate and beta-D-fructose 6-phosphate from D-ribose 5-phosphate and D-xylulose 5-phosphate (non-oxidative stage): step 2/3. Functionally, transaldolase is important for the balance of metabolites in the pentose-phosphate pathway. This Haemophilus influenzae (strain PittEE) protein is Transaldolase.